A 537-amino-acid chain; its full sequence is Phosphoenolpyruvate carboxykinase (ATP) (537 aa).

Arg61, Tyr195, and Lys201 together coordinate substrate. Residues Lys201, His220, and 236–244 (GLSGTGKTT) contribute to the ATP site. Residues Lys201 and His220 each coordinate Mn(2+). Asp257 provides a ligand contact to Mn(2+). 3 residues coordinate ATP: Glu285, Arg323, and Thr448. Arg323 contributes to the substrate binding site.

Belongs to the phosphoenolpyruvate carboxykinase (ATP) family. The cofactor is Mn(2+).

The protein localises to the cytoplasm. It carries out the reaction oxaloacetate + ATP = phosphoenolpyruvate + ADP + CO2. It participates in carbohydrate biosynthesis; gluconeogenesis. Functionally, involved in the gluconeogenesis. Catalyzes the conversion of oxaloacetate (OAA) to phosphoenolpyruvate (PEP) through direct phosphoryl transfer between the nucleoside triphosphate and OAA. This chain is Phosphoenolpyruvate carboxykinase (ATP), found in Parvibaculum lavamentivorans (strain DS-1 / DSM 13023 / NCIMB 13966).